Consider the following 491-residue polypeptide: Adenylosuccinate synthetase, chloroplastic (491 aa).

GTP-binding positions include 78–84 (GDEGKGK) and 106–108 (GHT). The active-site Proton acceptor is aspartate 79. 2 residues coordinate Mg(2+): aspartate 79 and glycine 106. Residues 79-82 (DEGK), 104-107 (NAGH), threonine 196, arginine 210, glutamine 290, threonine 305, and arginine 369 each bind IMP. Histidine 107 (proton donor) is an active-site residue. 365-371 (TTTGRPR) provides a ligand contact to substrate. GTP is bound by residues arginine 371, 397 to 399 (KLD), and 480 to 482 (GIG).

Belongs to the adenylosuccinate synthetase family. Homodimer. It depends on Mg(2+) as a cofactor.

It localises to the plastid. Its subcellular location is the chloroplast. It carries out the reaction IMP + L-aspartate + GTP = N(6)-(1,2-dicarboxyethyl)-AMP + GDP + phosphate + 2 H(+). It functions in the pathway purine metabolism; AMP biosynthesis via de novo pathway; AMP from IMP: step 1/2. In terms of biological role, plays an important role in the de novo pathway and in the salvage pathway of purine nucleotide biosynthesis. Catalyzes the first committed step in the biosynthesis of AMP from IMP. The sequence is that of Adenylosuccinate synthetase, chloroplastic from Populus trichocarpa (Western balsam poplar).